Reading from the N-terminus, the 751-residue chain is Catalase-peroxidase (751 aa).

A disordered region spans residues Met1–Asp21. A cross-link (tryptophyl-tyrosyl-methioninium (Trp-Tyr) (with M-270)) is located at residues Trp90–Tyr244. The active-site Proton acceptor is His91. Residues Tyr195–Ala227 are disordered. The segment covering Pro214–Ala227 has biased composition (basic and acidic residues). The segment at residues Tyr244 to Met270 is a cross-link (tryptophyl-tyrosyl-methioninium (Tyr-Met) (with W-90)). His285 serves as a coordination point for heme b. The tract at residues Ala365 to Lys387 is disordered.

It belongs to the peroxidase family. Peroxidase/catalase subfamily. As to quaternary structure, homodimer or homotetramer. Heme b is required as a cofactor. Post-translationally, formation of the three residue Trp-Tyr-Met cross-link is important for the catalase, but not the peroxidase activity of the enzyme.

It catalyses the reaction H2O2 + AH2 = A + 2 H2O. The enzyme catalyses 2 H2O2 = O2 + 2 H2O. In terms of biological role, bifunctional enzyme with both catalase and broad-spectrum peroxidase activity. This is Catalase-peroxidase from Pseudomonas putida (strain ATCC 700007 / DSM 6899 / JCM 31910 / BCRC 17059 / LMG 24140 / F1).